We begin with the raw amino-acid sequence, 98 residues long: UPF0473 protein LSL_1108 (98 aa).

Belongs to the UPF0473 family.

The polypeptide is UPF0473 protein LSL_1108 (Ligilactobacillus salivarius (strain UCC118) (Lactobacillus salivarius)).